The sequence spans 699 residues: Long-chain-fatty-acid--CoA ligase 1 (699 aa).

The residue at position 1 (Met1) is an N-acetylmethionine. Tyr9 is modified (3'-nitrotyrosine). Residues 25 to 45 (LPTNTLMGFGAFAALTTFWYA) traverse the membrane as a helical; Signal-anchor for type III membrane protein segment. Over 46 to 699 (TRPKALKPPC…IDELYATIKI (654 aa)) the chain is Cytoplasmic. Tyr85 carries the phosphotyrosine modification. Tyr86 carries the 3'-nitrotyrosine modification. Ser136 carries O-linked (GlcNAc) serine glycosylation. 3 positions are modified to N6-acetyllysine: Lys208, Lys357, and Lys387. Phosphoserine is present on Ser621. Position 633 is an N6-acetyllysine (Lys633).

Belongs to the ATP-dependent AMP-binding enzyme family. Mg(2+) serves as cofactor.

It localises to the mitochondrion outer membrane. Its subcellular location is the peroxisome membrane. The protein localises to the microsome membrane. It is found in the endoplasmic reticulum membrane. The enzyme catalyses a long-chain fatty acid + ATP + CoA = a long-chain fatty acyl-CoA + AMP + diphosphate. The catalysed reaction is (5Z,8Z,11Z,14Z)-eicosatetraenoate + ATP + CoA = (5Z,8Z,11Z,14Z)-eicosatetraenoyl-CoA + AMP + diphosphate. It catalyses the reaction 3,7,11,15-tetramethylhexadecanoate + ATP + CoA = phytanoyl-CoA + AMP + diphosphate. It carries out the reaction hexadecanoate + ATP + CoA = hexadecanoyl-CoA + AMP + diphosphate. The enzyme catalyses (E)-hexadec-2-enoate + ATP + CoA = (2E)-hexadecenoyl-CoA + AMP + diphosphate. The catalysed reaction is 2,6,10,14-tetramethylpentadecanoate + ATP + CoA = pristanoyl-CoA + AMP + diphosphate. It catalyses the reaction 14,15-epoxy-(5Z,8Z,11Z)-eicosatrienoate + ATP + CoA = 14,15-epoxy-(5Z,8Z,11Z)-eicosatrienoyl-CoA + AMP + diphosphate. It carries out the reaction 5-hydroxy-(6E,8Z,11Z,14Z)-eicosatetraenoate + ATP + CoA = 5-hydroxy-(6E,8Z,11Z,14Z)-eicosatetraenoyl-CoA + AMP + diphosphate. The enzyme catalyses 12-hydroxy-(5Z,8Z,10E,14Z)-eicosatetraenoate + ATP + CoA = 12-hydroxy-(5Z,8Z,10E,14Z)-eicosatetraenoyl-CoA + AMP + diphosphate. The catalysed reaction is 15-hydroxy-(5Z,8Z,11Z,13E)-eicosatetraenoate + ATP + CoA = 15-hydroxy-(5Z,8Z,11Z,13E)-eicosatetraenoyl-CoA + AMP + diphosphate. It catalyses the reaction (9Z)-octadecenoate + ATP + CoA = (9Z)-octadecenoyl-CoA + AMP + diphosphate. Its activity is regulated as follows. Inhibited at high temperature and by arachidonate. In terms of biological role, catalyzes the conversion of long-chain fatty acids to their active form acyl-CoAs for both synthesis of cellular lipids, and degradation via beta-oxidation. Preferentially uses palmitoleate, oleate and linoleate. Preferentially activates arachidonate than epoxyeicosatrienoic acids (EETs) or hydroxyeicosatrienoic acids (HETEs). The protein is Long-chain-fatty-acid--CoA ligase 1 of Mus musculus (Mouse).